We begin with the raw amino-acid sequence, 600 residues long: Na(+)/dicarboxylate cotransporter 3 (600 aa).

Topologically, residues 1 to 16 are cytoplasmic; that stretch reads MAALAALAKKVWSARR. A helical transmembrane segment spans residues 17-37; it reads LLVLLLVPLALLPILFALPPK. Residues 38 to 55 are Extracellular-facing; it reads EGRCLYVILLMAVYWCTE. Residues 56 to 76 form a helical membrane-spanning segment; that stretch reads ALPLSVTALLPIILFPFMGIL. Over 77-82 the chain is Cytoplasmic; the sequence is PSSKVC. Residues 83–103 traverse the membrane as a helical segment; sequence PQYFLDTNFLFLSGLIMASAI. Topologically, residues 104 to 137 are extracellular; it reads EEWNLHRRIALKVLMLVGVQPARLILGMMVTTSF. Residues 138–158 traverse the membrane as a helical segment; that stretch reads LSMWLSNTASTAMMLPIASAI. At 159–229 the chain is on the cytoplasmic side; the sequence is LKSLFGQREA…KEEEHRRNIW (71 aa). The chain crosses the membrane as a helical span at residues 230–250; that stretch reads KGFLISIPYSASIGGTATLTG. At 251-278 the chain is on the extracellular side; the sequence is TAPNLILLGQLKSFFPQCDVVNFGSWFI. The chain crosses the membrane as a helical span at residues 279–299; that stretch reads FAFPLMLLFLLVGWLWISFLY. The Cytoplasmic segment spans residues 300–336; the sequence is GGMSWRSWRKKKSKIRADAEDQAKAVIQEEFQNLGPI. The chain crosses the membrane as a helical span at residues 337-357; the sequence is KFAEQAVFILFCTFAILLFSR. The Extracellular segment spans residues 358-372; that stretch reads DPKFIPGWASLFAPG. A helical membrane pass occupies residues 373 to 393; the sequence is FVSDAVTGVAIVTILFFFPSQ. Over 394–422 the chain is Cytoplasmic; sequence KPSLKWWFDFKAPNSETEPLLSWKKAQET. The segment at residues 423–443 is an intramembrane region (helical); the sequence is VPWNIILLLGGGFAMAKGCEE. Over 444–461 the chain is Cytoplasmic; it reads SGLSAWIGGQLHPLEHVP. A helical transmembrane segment spans residues 462–482; the sequence is PLLAVLLITVVIAFFTEFASN. Topologically, residues 483–505 are extracellular; the sequence is TATIIIFLPVLAELAIRLHVHPL. Residues 506–526 traverse the membrane as a helical segment; the sequence is YLMIPGTVGCSYAFMLPVSTP. At 527–546 the chain is on the cytoplasmic side; that stretch reads PNSIAFSTGHLLVKDMVRTG. Residues 547 to 567 form a helical membrane-spanning segment; the sequence is LLMNLMGVLLLSLAMNTWAQT. Over 568–600 the chain is Extracellular; the sequence is IFQLGTFPDWANTHAANATALPPALTNNTVQTF. Residues Asn-584 and Asn-594 are each glycosylated (N-linked (GlcNAc...) asparagine).

Belongs to the SLC13A/DASS transporter (TC 2.A.47) family. NADC subfamily. Highly expressed in kidney, and at much lower levels in brain.

The protein localises to the cell membrane. It catalyses the reaction succinate(out) + 3 Na(+)(out) = succinate(in) + 3 Na(+)(in). It carries out the reaction 2-oxoglutarate(out) + 3 Na(+)(out) = 2-oxoglutarate(in) + 3 Na(+)(in). The enzyme catalyses N-acetyl-L-aspartate(out) + 3 Na(+)(out) = N-acetyl-L-aspartate(in) + 3 Na(+)(in). The catalysed reaction is fumarate(out) + 3 Na(+)(out) = fumarate(in) + 3 Na(+)(in). It catalyses the reaction glutarate(out) + 3 Na(+)(out) = glutarate(in) + 3 Na(+)(in). It carries out the reaction 2,2-dimethylsuccinate(out) + 3 Na(+)(out) = 2,2-dimethylsuccinate(in) + 3 Na(+)(in). The enzyme catalyses 2,3-dimethylsuccinate(out) + 3 Na(+)(out) = 2,3-dimethylsuccinate(in) + 3 Na(+)(in). The catalysed reaction is malate(out) + 3 Na(+)(out) = malate(in) + 3 Na(+)(in). It catalyses the reaction itaconate(out) + 3 Na(+)(out) = itaconate(in) + 3 Na(+)(in). Its function is as follows. High-affinity sodium-dicarboxylate cotransporter that accepts a range of substrates with 4-6 carbon atoms, such as the citric acid cycle intermediates succinate and alpha-ketoglutarate (2-oxoglutarate), as well as other compounds including N-acetyl-L-aspartate. Transports the dicarboxylate into the cell with a probable stoichiometry of 3 Na(+) for 1 divalent dicarboxylate, rendering the process electrogenic. Can transport citrate in a Na(+)-dependent manner, recognizing the divalent form of citrate rather than the trivalent form which is normally found in blood. Imports itaconate in hepatocytes leading to activation of TFEB-dependent lysosomal biogenesis involved in antibacterial innate immune response. This is Na(+)/dicarboxylate cotransporter 3 (Slc13a3) from Mus musculus (Mouse).